The following is a 417-amino-acid chain: WD repeat and FYVE domain-containing protein 2 (417 aa).

4 WD repeats span residues 29–68 (GHVARINDVILLSKDEGVWTASDDRSVRLYLKRDNDQFWP), 119–157 (CHAGPISGLGFALSSELIFSCSRDKSIVWHCSENSNKVG), 202–241 (AHTNSITSLTWDGNKKVLYSGSSDHLIIMWDIGGGKGEAY), and 245–284 (GHNGKVTTLCAAPAAKRLFSADEHGKLMCWDMDVRRVETP). The segment at 286 to 357 (WKTSDCCQKC…ICNDCAGRMK (72 aa)) adopts an FYVE-type zinc-finger fold. Zn(2+) contacts are provided by Cys-292, Cys-295, Cys-319, Cys-322, Cys-327, Cys-330, Cys-349, and Cys-352. A WD 5 repeat occupies 373-412 (EIRTGITAMHLQETLGLLVTSGQNRVVMIWDVRSVCSAPS).

In terms of biological role, plays a role in coelomocyte endocytosis. The polypeptide is WD repeat and FYVE domain-containing protein 2 (Caenorhabditis briggsae).